Consider the following 267-residue polypeptide: MEMO1 family protein MM_1761 (267 aa).

The protein belongs to the MEMO1 family.

The chain is MEMO1 family protein MM_1761 from Methanosarcina mazei (strain ATCC BAA-159 / DSM 3647 / Goe1 / Go1 / JCM 11833 / OCM 88) (Methanosarcina frisia).